The chain runs to 323 residues: MLIDGFGRKVDYLRVSVTERCNFRCQYCMPEKPFSWVPRENLLSYEDLFKFIKASIDEGIKKVRITGGEPLLREDLDFFIKMVFDYKKDIDLALTTNGYLLSKMAKKLKDAGLKRVNISLDTLNKETAQKIAQKDVLEKVLEGIEEASKVGLKIKINCVPLKGVSEKDVLEVLEFCKSRGFVVRFIEFMENFHAKDGAKGLNSDEIKAIIAQKYPNFKTVLRDTSSPAQYYELEDGYQFGIIEPHKDDFCASCNRIRLTAEGFLIPCLYFEDAMSIKNAVQSNKIDEAVEILKKVLKNKPEKNKWSQKDDNEVSTRAFYQTGG.

One can recognise a Radical SAM core domain in the interval 5–228 (GFGRKVDYLR…TVLRDTSSPA (224 aa)). A GTP-binding site is contributed by Arg-14. The [4Fe-4S] cluster site is built by Cys-21 and Cys-25. Tyr-27 contacts S-adenosyl-L-methionine. Cys-28 provides a ligand contact to [4Fe-4S] cluster. Arg-64 provides a ligand contact to GTP. Gly-68 is an S-adenosyl-L-methionine binding site. GTP is bound at residue Thr-95. Ser-119 is a binding site for S-adenosyl-L-methionine. Lys-155 contacts GTP. Met-189 contacts S-adenosyl-L-methionine. The [4Fe-4S] cluster site is built by Cys-250 and Cys-253. 255 to 257 (RIR) contacts GTP. Cys-267 lines the [4Fe-4S] cluster pocket. Residues 302-313 (KNKWSQKDDNEV) show a composition bias toward basic and acidic residues. The disordered stretch occupies residues 302-323 (KNKWSQKDDNEVSTRAFYQTGG).

This sequence belongs to the radical SAM superfamily. MoaA family. In terms of assembly, monomer and homodimer. Requires [4Fe-4S] cluster as cofactor.

The enzyme catalyses GTP + AH2 + S-adenosyl-L-methionine = (8S)-3',8-cyclo-7,8-dihydroguanosine 5'-triphosphate + 5'-deoxyadenosine + L-methionine + A + H(+). The protein operates within cofactor biosynthesis; molybdopterin biosynthesis. In terms of biological role, catalyzes the cyclization of GTP to (8S)-3',8-cyclo-7,8-dihydroguanosine 5'-triphosphate. The chain is GTP 3',8-cyclase from Aliarcobacter butzleri (strain RM4018) (Arcobacter butzleri).